Here is a 428-residue protein sequence, read N- to C-terminus: Immunoglobulin superfamily containing leucine-rich repeat protein (428 aa).

The N-terminal stretch at 1 to 18 (MQELHLLWWALLLGLAQA) is a signal peptide. The LRRNT domain maps to 19 to 50 (CPEPCDCGEKYGFQIADCAYRDLEAVPPGFPA). Asn-51 is a glycosylation site (N-linked (GlcNAc...) asparagine). 5 LRR repeats span residues 51-72 (NVTALSLSANRLPGLPEGAFRE), 75-96 (LLQSLWLAHNEIRMVAAGALAS), 99-122 (HLKSLDLSHNLISDFAWSDLHNLS), 123-144 (ALQLLKMDSNELTFIPRDAFRS), and 147-168 (ALRSLQLNHNRLHTLAEGTFTP). Positions 180–231 (NPFDCTCGIVWLKTWALATAVSIPEQDNIACTSPHVLKGTPLSRLPPLPCSA) constitute an LRRCT domain. One can recognise an Ig-like domain in the interval 232-343 (PSVQLSYQPS…GSAESSVDVA (112 aa)). An intrachain disulfide couples Cys-257 to Cys-327. Residue Asn-309 is glycosylated (N-linked (GlcNAc...) asparagine).

It localises to the secreted. The sequence is that of Immunoglobulin superfamily containing leucine-rich repeat protein (ISLR) from Pongo abelii (Sumatran orangutan).